A 554-amino-acid polypeptide reads, in one-letter code: CTP synthase (554 aa).

The segment at 1-265 (MTPLIFVTGG…DEIVIDQFKL (265 aa)) is amidoligase domain. S13 contributes to the CTP binding site. S13 contacts UTP. Residues 14–19 (SLGKGI) and D71 contribute to the ATP site. D71 and E139 together coordinate Mg(2+). CTP-binding positions include 146–148 (DIE), 186–191 (KTKPTQ), and K222. UTP is bound by residues 186-191 (KTKPTQ) and K222. Residues 292-545 (TIAVVGKYVD…VKASRARKAG (254 aa)) enclose the Glutamine amidotransferase type-1 domain. G353 is an L-glutamine binding site. The active-site Nucleophile; for glutamine hydrolysis is the C380. L-glutamine-binding positions include 381–384 (YGMQ), E404, and R471. Residues H518 and E520 contribute to the active site.

Belongs to the CTP synthase family. As to quaternary structure, homotetramer.

It carries out the reaction UTP + L-glutamine + ATP + H2O = CTP + L-glutamate + ADP + phosphate + 2 H(+). The catalysed reaction is L-glutamine + H2O = L-glutamate + NH4(+). The enzyme catalyses UTP + NH4(+) + ATP = CTP + ADP + phosphate + 2 H(+). The protein operates within pyrimidine metabolism; CTP biosynthesis via de novo pathway; CTP from UDP: step 2/2. Its activity is regulated as follows. Allosterically activated by GTP, when glutamine is the substrate; GTP has no effect on the reaction when ammonia is the substrate. The allosteric effector GTP functions by stabilizing the protein conformation that binds the tetrahedral intermediate(s) formed during glutamine hydrolysis. Inhibited by the product CTP, via allosteric rather than competitive inhibition. Functionally, catalyzes the ATP-dependent amination of UTP to CTP with either L-glutamine or ammonia as the source of nitrogen. Regulates intracellular CTP levels through interactions with the four ribonucleotide triphosphates. This is CTP synthase from Xylella fastidiosa (strain M23).